The following is a 231-amino-acid chain: NADH-ubiquinone oxidoreductase chain 4 (231 aa).

6 consecutive transmembrane segments (helical) span residues 1 to 21 (PIAGSMVLAAILLKLGGYGII), 34 to 54 (VFLPFIILALWGAILANLTCL), 61 to 80 (SLIAYSSISHMGLVVAAIMI), 84 to 106 (WGLSGAMALMIAHGFTSSALFCL), 118 to 138 (ILILTRGFHNILPMTSTWWLL), and 169 to 189 (TIILLGLSMLITASYSLHMFL).

The protein belongs to the complex I subunit 4 family.

It localises to the mitochondrion membrane. It carries out the reaction a ubiquinone + NADH + 5 H(+)(in) = a ubiquinol + NAD(+) + 4 H(+)(out). Functionally, core subunit of the mitochondrial membrane respiratory chain NADH dehydrogenase (Complex I) that is believed to belong to the minimal assembly required for catalysis. Complex I functions in the transfer of electrons from NADH to the respiratory chain. The immediate electron acceptor for the enzyme is believed to be ubiquinone. This is NADH-ubiquinone oxidoreductase chain 4 (MT-ND4) from Porthidium nasutum (Hognosed pitviper).